Reading from the N-terminus, the 70-residue chain is Translation initiation factor IF-1 (70 aa).

One can recognise an S1-like domain in the interval 1 to 70; it reads MKETNLSIKG…LTKGRIIYRH (70 aa).

It belongs to the IF-1 family. Component of the 30S ribosomal translation pre-initiation complex which assembles on the 30S ribosome in the order IF-2 and IF-3, IF-1 and N-formylmethionyl-tRNA(fMet); mRNA recruitment can occur at any time during PIC assembly.

It localises to the cytoplasm. One of the essential components for the initiation of protein synthesis. Stabilizes the binding of IF-2 and IF-3 on the 30S subunit to which N-formylmethionyl-tRNA(fMet) subsequently binds. Helps modulate mRNA selection, yielding the 30S pre-initiation complex (PIC). Upon addition of the 50S ribosomal subunit IF-1, IF-2 and IF-3 are released leaving the mature 70S translation initiation complex. This chain is Translation initiation factor IF-1, found in Mycoplasmoides gallisepticum (strain R(low / passage 15 / clone 2)) (Mycoplasma gallisepticum).